Here is a 485-residue protein sequence, read N- to C-terminus: N-succinylglutamate 5-semialdehyde dehydrogenase (485 aa).

220-225 (GSANTG) is a binding site for NAD(+). Residues glutamate 243 and cysteine 278 contribute to the active site.

Belongs to the aldehyde dehydrogenase family. AstD subfamily.

It carries out the reaction N-succinyl-L-glutamate 5-semialdehyde + NAD(+) + H2O = N-succinyl-L-glutamate + NADH + 2 H(+). Its pathway is amino-acid degradation; L-arginine degradation via AST pathway; L-glutamate and succinate from L-arginine: step 4/5. Its function is as follows. Catalyzes the NAD-dependent reduction of succinylglutamate semialdehyde into succinylglutamate. This is N-succinylglutamate 5-semialdehyde dehydrogenase from Aliivibrio fischeri (strain ATCC 700601 / ES114) (Vibrio fischeri).